The following is a 197-amino-acid chain: Small ribosomal subunit protein uS4c (197 aa).

The S4 RNA-binding domain occupies 92–153 (MRLDAVVYRL…APIVEHAKTF (62 aa)).

Belongs to the universal ribosomal protein uS4 family. In terms of assembly, part of the 30S ribosomal subunit. Contacts protein S5. The interaction surface between S4 and S5 is involved in control of translational fidelity.

Its subcellular location is the plastid. It is found in the chloroplast. Its function is as follows. One of the primary rRNA binding proteins, it binds directly to 16S rRNA where it nucleates assembly of the body of the 30S subunit. With S5 and S12 plays an important role in translational accuracy. The polypeptide is Small ribosomal subunit protein uS4c (rps4) (Ostreococcus tauri).